The following is a 325-amino-acid chain: NADH-quinone oxidoreductase subunit H (325 aa).

8 consecutive transmembrane segments (helical) span residues 11 to 31, 81 to 101, 114 to 134, 154 to 174, 186 to 206, 237 to 257, 265 to 285, and 304 to 324; these read ILLT…CGAF, VIFT…FAIV, IGIL…LFAG, LSYE…AGSF, VWNV…GVAV, FFVG…TLFF, LPPF…FILI, and ICLP…LWQA.

This sequence belongs to the complex I subunit 1 family. In terms of assembly, NDH-1 is composed of 13 different subunits. Subunits NuoA, H, J, K, L, M, N constitute the membrane sector of the complex.

Its subcellular location is the cell inner membrane. The catalysed reaction is a quinone + NADH + 5 H(+)(in) = a quinol + NAD(+) + 4 H(+)(out). In terms of biological role, NDH-1 shuttles electrons from NADH, via FMN and iron-sulfur (Fe-S) centers, to quinones in the respiratory chain. The immediate electron acceptor for the enzyme in this species is believed to be ubiquinone. Couples the redox reaction to proton translocation (for every two electrons transferred, four hydrogen ions are translocated across the cytoplasmic membrane), and thus conserves the redox energy in a proton gradient. This subunit may bind ubiquinone. The polypeptide is NADH-quinone oxidoreductase subunit H (Escherichia coli O45:K1 (strain S88 / ExPEC)).